The primary structure comprises 141 residues: Ly6/PLAUR domain-containing protein 1 (141 aa).

Positions 1–20 are cleaved as a signal peptide; that stretch reads MWVLGIAATFCGLFWLPGLA. 6 disulfides stabilise this stretch: cysteine 25–cysteine 54, cysteine 28–cysteine 37, cysteine 46–cysteine 71, cysteine 77–cysteine 100, cysteine 88–cysteine 97, and cysteine 101–cysteine 106. A UPAR/Ly6 domain is found at 25 to 107; that stretch reads CYQCEEFQLN…ISCCNTPLCN (83 aa). Asparagine 45 is a glycosylation site (N-linked (GlcNAc...) asparagine). Glycine 115 carries the GPI-anchor amidated glycine lipid modification. A propeptide spans 116–141 (removed in mature form); that stretch reads SSASAIRPGLLTTLLFFHLALCLAHC.

In terms of assembly, interacts with CHRNA4 and nAChRs containing alpha-4:beta-2 (CHRNA4:CHRNB2) and alpha-7 (CHRNA7) subunits. Preferentially expressed in the nervous system. Expressed in embryonic and postnatal postmitotic central and peripheral neurons including subpopulations of motor neurons, sensory neurons, interneurons and neurons of the autonomous nervous system. Expressed around the growing nerves in the limb bud. Expressed at high levels in specific brain regions such as the prefrontal cortex, amygdala, hippocampus, mediodorsal thalamus, dentate gyrus and specific brainstem nuclei (at protein level).

It localises to the cell membrane. Functionally, believed to act as a modulator of nicotinic acetylcholine receptors (nAChRs) activity. In vitro increases receptor desensitization and decreases affinity for ACh of alpha-4:beta-2-containing nAChRs. May play a role in the intracellular trafficking of alpha-4:beta-2 and alpha-7-containing nAChRs and may inhibit their expression at the cell surface. May be involved in the control of anxiety. The chain is Ly6/PLAUR domain-containing protein 1 (Lypd1) from Mus musculus (Mouse).